Reading from the N-terminus, the 604-residue chain is Prostaglandin G/H synthase 2 (604 aa).

Positions 1-17 are cleaved as a signal peptide; that stretch reads MLARALLLCAALALGQA. The EGF-like domain occupies 18 to 55; that stretch reads ANPCCSNPCQNRGECLSVGFDRYKCDCTRTGYYGENCT. Cystine bridges form between C21–C32, C22–C145, C26–C42, and C44–C54. The N-linked (GlcNAc...) asparagine glycan is linked to N53. Substrate is bound at residue R106. N130 is a glycosylation site (N-linked (GlcNAc...) asparagine). H193 acts as the Proton acceptor in catalysis. Residue Y341 coordinates substrate. Y371 serves as the catalytic For cyclooxygenase activity. H374 is a heme b binding site. N396 carries an N-linked (GlcNAc...) asparagine glycan. S-nitrosocysteine is present on C526. C555 and C561 form a disulfide bridge. N580 carries an N-linked (GlcNAc...) asparagine glycan.

Belongs to the prostaglandin G/H synthase family. In terms of assembly, homodimer. Requires heme b as cofactor. Post-translationally, S-nitrosylation by NOS2 (iNOS) activates enzyme activity. S-nitrosylation may take place on different Cys residues in addition to Cys-526.

The protein resides in the microsome membrane. Its subcellular location is the endoplasmic reticulum membrane. It is found in the nucleus inner membrane. The protein localises to the nucleus outer membrane. The enzyme catalyses (5Z,8Z,11Z,14Z)-eicosatetraenoate + AH2 + 2 O2 = prostaglandin H2 + A + H2O. It catalyses the reaction (5Z,8Z,11Z,14Z)-eicosatetraenoate + 2 O2 = prostaglandin G2. The catalysed reaction is prostaglandin G2 + AH2 = prostaglandin H2 + A + H2O. It carries out the reaction (5Z,8Z,11Z,14Z,17Z)-eicosapentaenoate + 2 O2 = prostaglandin G3. The enzyme catalyses prostaglandin G3 + AH2 = prostaglandin H3 + A + H2O. It catalyses the reaction (8Z,11Z,14Z)-eicosatrienoate + 2 O2 = prostaglandin G1. The catalysed reaction is prostaglandin G1 + AH2 = prostaglandin H1 + A + H2O. It carries out the reaction 2-(5Z,8Z,11Z,14Z)-eicosatetraenoyl-sn-glycero-3-phosphoethanolamine + 2 O2 = 2-(prostaglandin G2)-sn-glycero-3-phosphoethanolamine. The enzyme catalyses 2-(prostaglandin G2)-sn-glycero-3-phosphoethanolamine + AH2 = 2-(prostaglandin H2)-sn-glycero-3-phosphoethanolamine + A + H2O. It catalyses the reaction 2-(5Z,8Z,11Z,14Z)-eicosatetraenoyl-sn-glycero-3-phosphocholine + 2 O2 = 2-(prostaglandin G2)-sn-glycero-3-phosphocholine. The catalysed reaction is 2-(prostaglandin G2)-sn-glycero-3-phosphocholine + AH2 = 2-(prostaglandin H2)-sn-glycero-3-phosphocholine + A + H2O. It carries out the reaction (15S)-hydroperoxy-(5Z,8Z,11Z,13E)-eicosatetraenoate + AH2 = (15S)-hydroxy-(5Z,8Z,11Z,13E)-eicosatetraenoate + A + H2O. The enzyme catalyses 2-(5Z,8Z,11Z,14Z)-eicosatetraenoyl-sn-glycero-3-phosphocholine + AH2 + O2 = 2-[(15S)-hydroxy-(5Z,8Z,11Z,13E)-eicosatetraenoyl]-sn-glycero-3-phosphocholine + A + H2O. It catalyses the reaction 2-(5Z,8Z,11Z,14Z)-eicosatetraenoyl-sn-glycero-3-phosphocholine + AH2 + O2 = 2-[(15R)-hydroxy-(5Z,8Z,11Z,13E)-eicosatetraenoyl]-sn-glycero-3-phosphocholine + A + H2O. The catalysed reaction is 2-(5Z,8Z,11Z,14Z)-eicosatetraenoyl-sn-glycero-3-phosphocholine + AH2 + O2 = 2-[(11R)-hydroxy-(5Z,8Z,12E,14Z)-eicosatetraenoyl]-sn-glycero-3-phosphocholine + A + H2O. It carries out the reaction (9Z,12Z)-octadecadienoate + AH2 + O2 = 9-hydroxy-(10E,12Z)-octadecadienoate + A + H2O. The enzyme catalyses (9Z,12Z)-octadecadienoate + AH2 + O2 = 13-hydroxy-(9Z,11E)-octadecadienoate + A + H2O. It catalyses the reaction (5Z,8Z,11Z,14Z)-eicosatetraenoate + AH2 + O2 = (15R)-hydroxy-(5Z,8Z,11Z,13E)-eicosatetraenoate + A + H2O. The catalysed reaction is (5Z,8Z,11Z,14Z)-eicosatetraenoate + AH2 + O2 = (11R)-hydroxy-(5Z,8Z,12E,14Z)-eicosatetraenoate + A + H2O. It carries out the reaction (5Z,8Z,11Z,14Z,17Z)-eicosapentaenoate + AH2 + O2 = (11R)-hydroxy-(5Z,8Z,12E,14Z,17Z)-eicosapentaenoate + A + H2O. The enzyme catalyses (5Z,8Z,11Z,14Z,17Z)-eicosapentaenoate + AH2 + O2 = (18S)-hydroxy-(5Z,8Z,11Z,14Z,16E)-eicosapentaenoate + A + H2O. It catalyses the reaction (5Z,8Z,11Z,14Z,17Z)-eicosapentaenoate + AH2 + O2 = (18R)-hydroxy-(5Z,8Z,11Z,14Z,16E)-eicosapentaenoate + A + H2O. The catalysed reaction is (5Z,8Z,11Z,14Z,17Z)-eicosapentaenoate + AH2 + O2 = (15R)-hydroxy-(5Z,8Z,11Z,13E,17Z)-eicosapentaenoate + A + H2O. It carries out the reaction (5Z,8Z,11Z,14Z,17Z)-eicosapentaenoate + AH2 + O2 = (15S)-hydroxy-(5Z,8Z,11Z,13E,17Z)-eicosapentaenoate + A + H2O. The enzyme catalyses (7Z,10Z,13Z,16Z,19Z)-docosapentaenoate + AH2 + O2 = 13R-hydroxy-(7Z,10Z,14E,16Z,19Z)-docosapentaenoate + A + H2O. It catalyses the reaction (4Z,7Z,10Z,13Z,16Z,19Z)-docosahexaenoate + AH2 + O2 = 13-hydroxy-(4Z,7Z,10Z,14E,16Z,19Z)-docosahexaenoate + A + H2O. The catalysed reaction is (5S)-hydroxy-(6E,8Z,11Z,14Z)-eicosatetraenoate + AH2 + O2 = (5S,15R)-dihydroxy-(6E,8Z,11Z,13E)-eicosatetraenoate + A + H2O. It carries out the reaction (4Z,7Z,10Z,13Z,16Z,19Z)-docosahexaenoate + AH2 + O2 = 17R-hydroxy-(4Z,7Z,10Z,13Z,15E,19Z)-docosahexaenoate + A + H2O. The enzyme catalyses (5S)-hydroxy-(6E,8Z,11Z,14Z)-eicosatetraenoate + AH2 + O2 = (5S,15S)-dihydroxy-(6E,8Z,11Z,13E)-eicosatetraenoate + A + H2O. It catalyses the reaction (5S)-hydroxy-(6E,8Z,11Z,14Z)-eicosatetraenoate + AH2 + O2 = (5S,11R)-dihydroxy-(6E,8Z,12E,14Z)-eicosatetraenoate + A + H2O. The catalysed reaction is 2-(5Z,8Z,11Z,14Z-eicosatetraenoyl)-glycerol + 2 O2 = 2-glyceryl-prostaglandin G2. It carries out the reaction 2-glyceryl-prostaglandin G2 + AH2 = 2-glyceryl-prostaglandin H2 + A + H2O. The enzyme catalyses (5Z,8Z,11Z,14Z)-eicosatetraenoate + O2 = (15R)-hydroperoxy-(5Z,8Z,11Z,13E)-eicosatetraenoate. It catalyses the reaction (5Z,8Z,11Z,14Z)-eicosatetraenoate + O2 = 11R-hydroperoxy-(5Z,8Z,12E,14Z)-eicosatetraenoate. The catalysed reaction is (9Z,12Z)-octadecadienoate + AH2 + O2 = (9R)-hydroxy-(10E,12Z)-octadecadienoate + A + H2O. It carries out the reaction (9Z,12Z)-octadecadienoate + AH2 + O2 = (9S)-hydroxy-(10E,12Z)-octadecadienoate + A + H2O. The enzyme catalyses (9Z,12Z)-octadecadienoate + AH2 + O2 = (13S)-hydroxy-(9Z,11E)-octadecadienoate + A + H2O. It catalyses the reaction (9Z,12Z)-octadecadienoate + AH2 + O2 = (13R)-hydroxy-(9Z,11E)-octadecadienoate + A + H2O. The protein operates within lipid metabolism; prostaglandin biosynthesis. Functionally, dual cyclooxygenase and peroxidase in the biosynthesis pathway of prostanoids, a class of C20 oxylipins mainly derived from arachidonate ((5Z,8Z,11Z,14Z)-eicosatetraenoate, AA, C20:4(n-6)), with a particular role in the inflammatory response. The cyclooxygenase activity oxygenates AA to the hydroperoxy endoperoxide prostaglandin G2 (PGG2), and the peroxidase activity reduces PGG2 to the hydroxy endoperoxide prostaglandin H2 (PGH2), the precursor of all 2-series prostaglandins and thromboxanes. This complex transformation is initiated by abstraction of hydrogen at carbon 13 (with S-stereochemistry), followed by insertion of molecular O2 to form the endoperoxide bridge between carbon 9 and 11 that defines prostaglandins. The insertion of a second molecule of O2 (bis-oxygenase activity) yields a hydroperoxy group in PGG2 that is then reduced to PGH2 by two electrons. Similarly catalyzes successive cyclooxygenation and peroxidation of dihomo-gamma-linoleate (DGLA, C20:3(n-6)) and eicosapentaenoate (EPA, C20:5(n-3)) to corresponding PGH1 and PGH3, the precursors of 1- and 3-series prostaglandins. In an alternative pathway of prostanoid biosynthesis, converts 2-arachidonoyl lysophopholipids to prostanoid lysophopholipids, which are then hydrolyzed by intracellular phospholipases to release free prostanoids. Metabolizes 2-arachidonoyl glycerol yielding the glyceryl ester of PGH2, a process that can contribute to pain response. Generates lipid mediators from n-3 and n-6 polyunsaturated fatty acids (PUFAs) via a lipoxygenase-type mechanism. Oxygenates PUFAs to hydroperoxy compounds and then reduces them to corresponding alcohols. Plays a role in the generation of resolution phase interaction products (resolvins) during both sterile and infectious inflammation. Metabolizes docosahexaenoate (DHA, C22:6(n-3)) to 17R-HDHA, a precursor of the D-series resolvins (RvDs). As a component of the biosynthetic pathway of E-series resolvins (RvEs), converts eicosapentaenoate (EPA, C20:5(n-3)) primarily to 18S-HEPE that is further metabolized by ALOX5 and LTA4H to generate 18S-RvE1 and 18S-RvE2. In vascular endothelial cells, converts docosapentaenoate (DPA, C22:5(n-3)) to 13R-HDPA, a precursor for 13-series resolvins (RvTs) shown to activate macrophage phagocytosis during bacterial infection. In activated leukocytes, contributes to oxygenation of hydroxyeicosatetraenoates (HETE) to diHETES (5,15-diHETE and 5,11-diHETE). Can also use linoleate (LA, (9Z,12Z)-octadecadienoate, C18:2(n-6)) as substrate and produce hydroxyoctadecadienoates (HODEs) in a regio- and stereospecific manner, being (9R)-HODE ((9R)-hydroxy-(10E,12Z)-octadecadienoate) and (13S)-HODE ((13S)-hydroxy-(9Z,11E)-octadecadienoate) its major products. During neuroinflammation, plays a role in neuronal secretion of specialized preresolving mediators (SPMs) 15R-lipoxin A4 that regulates phagocytic microglia. This Cavia porcellus (Guinea pig) protein is Prostaglandin G/H synthase 2 (PTGS2).